A 283-amino-acid chain; its full sequence is Bifunctional protein FolD (283 aa).

NADP(+) contacts are provided by residues 166–168 (GRS), Ser-191, and Ile-232.

Belongs to the tetrahydrofolate dehydrogenase/cyclohydrolase family. Homodimer.

It carries out the reaction (6R)-5,10-methylene-5,6,7,8-tetrahydrofolate + NADP(+) = (6R)-5,10-methenyltetrahydrofolate + NADPH. The catalysed reaction is (6R)-5,10-methenyltetrahydrofolate + H2O = (6R)-10-formyltetrahydrofolate + H(+). Its pathway is one-carbon metabolism; tetrahydrofolate interconversion. Catalyzes the oxidation of 5,10-methylenetetrahydrofolate to 5,10-methenyltetrahydrofolate and then the hydrolysis of 5,10-methenyltetrahydrofolate to 10-formyltetrahydrofolate. The chain is Bifunctional protein FolD from Rickettsia bellii (strain RML369-C).